A 566-amino-acid polypeptide reads, in one-letter code: Bifunctional NADP phosphatase/NAD kinase (566 aa).

The segment at 1–283 (MDMLEMALNI…KLVGIFGNRW (283 aa)) is NADP phosphatase. Residues glutamate 66, aspartate 85, valine 87, aspartate 88, and aspartate 229 each contribute to the Mg(2+) site. Residues 275-566 (LVGIFGNRWR…YNKLKKLSLM (292 aa)) are NAD kinase. The Proton acceptor role is filled by aspartate 355. NAD(+)-binding positions include 355–356 (DG), arginine 360, 430–431 (NE), lysine 441, arginine 458, aspartate 460, 471–476 (TAYSLS), and asparagine 528.

The protein in the N-terminal section; belongs to the inositol monophosphatase superfamily. This sequence in the C-terminal section; belongs to the NAD kinase family. As to quaternary structure, homotetramer. The cofactor is Mg(2+).

It is found in the cytoplasm. It carries out the reaction NAD(+) + ATP = ADP + NADP(+) + H(+). The catalysed reaction is NADP(+) + H2O = phosphate + NAD(+). In terms of biological role, involved in the regulation of the intracellular balance between NAD(H) and NADP(H), and is a key enzyme in the biosynthesis of NADP. Catalyzes the phosphorylation and dephosphorylation of NAD and NADP, respectively. Although it shows conflicting dual activities and is able to supply NADP, it seems that its physiological role is to prevent excess accumulation of NADP. The chain is Bifunctional NADP phosphatase/NAD kinase from Methanococcus maripaludis (strain DSM 14266 / JCM 13030 / NBRC 101832 / S2 / LL).